The sequence spans 296 residues: Cytidine deaminase (296 aa).

CMP/dCMP-type deaminase domains follow at residues 47–167 (TEAE…FGPK) and 186–296 (DSSD…VDPV). A substrate-binding site is contributed by 88–90 (NLE). His101 contacts Zn(2+). The Proton donor role is filled by Glu103. 2 residues coordinate Zn(2+): Cys128 and Cys131.

It belongs to the cytidine and deoxycytidylate deaminase family. In terms of assembly, homodimer. Zn(2+) serves as cofactor.

The enzyme catalyses cytidine + H2O + H(+) = uridine + NH4(+). It catalyses the reaction 2'-deoxycytidine + H2O + H(+) = 2'-deoxyuridine + NH4(+). This enzyme scavenges exogenous and endogenous cytidine and 2'-deoxycytidine for UMP synthesis. In Shewanella sp. (strain ANA-3), this protein is Cytidine deaminase.